The sequence spans 269 residues: Energy-coupling factor transporter ATP-binding protein EcfA1 (269 aa).

One can recognise an ABC transporter domain in the interval 8–242 (IVFKNVSFQY…AEELTTIGLD (235 aa)). An ATP-binding site is contributed by 42 to 49 (GHNGSGKS).

This sequence belongs to the ABC transporter superfamily. Energy-coupling factor EcfA family. In terms of assembly, forms a stable energy-coupling factor (ECF) transporter complex composed of 2 membrane-embedded substrate-binding proteins (S component), 2 ATP-binding proteins (A component) and 2 transmembrane proteins (T component).

The protein resides in the cell membrane. ATP-binding (A) component of a common energy-coupling factor (ECF) ABC-transporter complex. Unlike classic ABC transporters this ECF transporter provides the energy necessary to transport a number of different substrates. The polypeptide is Energy-coupling factor transporter ATP-binding protein EcfA1 (Staphylococcus aureus (strain MSSA476)).